Reading from the N-terminus, the 183-residue chain is GTP cyclohydrolase 1 (183 aa).

Positions 71, 74, and 142 each coordinate Zn(2+).

It belongs to the GTP cyclohydrolase I family. In terms of assembly, toroid-shaped homodecamer, composed of two pentamers of five dimers.

The enzyme catalyses GTP + H2O = 7,8-dihydroneopterin 3'-triphosphate + formate + H(+). It functions in the pathway cofactor biosynthesis; 7,8-dihydroneopterin triphosphate biosynthesis; 7,8-dihydroneopterin triphosphate from GTP: step 1/1. This is GTP cyclohydrolase 1 from Leptospira borgpetersenii serovar Hardjo-bovis (strain JB197).